The following is a 447-amino-acid chain: MSTMTPAEIVSELDKHIIGQAKAKKAVAVALRNRWRRQQVAEPLRQEITPKNILMIGPTGVGKTEIARRLAKLADAPFIKIEATKFTEVGYVGRDVDSIVRDLIEISVKQTREAEMRKVRSKATDQAEDRILDILLPQPRAVGFGGNAEHANDDNNATRQTFRKRLREGQLDDKEVELDLEQPSVGMDIMAPPGMEEMTEQIRSMFSNLGSGKKQRRKVKIKEALKLLTDEEAAKMLNEEEVKTKAVQNVEQNGIVFLDEIDKITSRNNEGSGGEVSRQGVQRDLLPLVEGTTVNTKYGMVKTDHILFIASGAFHLAKPSDLIPELQGRFPIRVELDSLSVEDFEAILDATDASLVKQYQALLATEDVQLEFAADGIRRLAEIAFAVNEKTENIGARRLYTVIEKLLEEVSFSAGNHAGERVTIDAKYVDRALGEVAQDEDLSRYVL.

Residues isoleucine 18, 60-65, aspartate 259, glutamate 325, and arginine 397 each bind ATP; that span reads GVGKTE.

It belongs to the ClpX chaperone family. HslU subfamily. A double ring-shaped homohexamer of HslV is capped on each side by a ring-shaped HslU homohexamer. The assembly of the HslU/HslV complex is dependent on binding of ATP.

It is found in the cytoplasm. ATPase subunit of a proteasome-like degradation complex; this subunit has chaperone activity. The binding of ATP and its subsequent hydrolysis by HslU are essential for unfolding of protein substrates subsequently hydrolyzed by HslV. HslU recognizes the N-terminal part of its protein substrates and unfolds these before they are guided to HslV for hydrolysis. In Burkholderia cenocepacia (strain HI2424), this protein is ATP-dependent protease ATPase subunit HslU.